The following is a 411-amino-acid chain: MEAFLQKAKQASRAIATLLPQRRNEILRAMAGAIRESQEMILNVNALDLKEAQASGLKGSMLERLALDGPKIAGMARAIEEIAMLRNPLGRIVDGWVVENGLRIEKVSTPIGVVGIIYESRPNVTSDTAALCFKSGNVCVLKGGKEAKRSNEAIASVMQAVLKANNLPIEAISLLPDASREGVAKLVKMDQYVDLIVPRGGNALISFVSENATIPVIKHDKGLCHLYIHEEADFAKALPIVINAKTQRPSVCNAIETLLVDETIHERFLLELRPLLEEKGTEIRGCEKSLKILGGKRASEEDFHTEYGENILNVRVVKGFEEALEHIAIYGSQHSESIITQNHSIAERFLEEVDASSVYVNASTRFTDGGEFGFGAEVGISTSKLHARGPMGINELTTYKFKIYGEGQIRK.

This sequence belongs to the gamma-glutamyl phosphate reductase family.

Its subcellular location is the cytoplasm. The enzyme catalyses L-glutamate 5-semialdehyde + phosphate + NADP(+) = L-glutamyl 5-phosphate + NADPH + H(+). It functions in the pathway amino-acid biosynthesis; L-proline biosynthesis; L-glutamate 5-semialdehyde from L-glutamate: step 2/2. In terms of biological role, catalyzes the NADPH-dependent reduction of L-glutamate 5-phosphate into L-glutamate 5-semialdehyde and phosphate. The product spontaneously undergoes cyclization to form 1-pyrroline-5-carboxylate. This is Gamma-glutamyl phosphate reductase from Wolinella succinogenes (strain ATCC 29543 / DSM 1740 / CCUG 13145 / JCM 31913 / LMG 7466 / NCTC 11488 / FDC 602W) (Vibrio succinogenes).